The sequence spans 308 residues: Mitochondrial import receptor subunit TOM40B (308 aa).

The tract at residues 1–29 (MGNTLGLAPMGTLPRRSHRREEPLPNPGS) is disordered. Residues 281–308 (PLPVTLALGAFLNHWRNRFHCGFSITVG) are required for mitochondrial targeting.

It belongs to the Tom40 family. As to quaternary structure, forms part of the preprotein translocase of the outer mitochondrial membrane (TOM complex) containing TOMM22, TOMM40, TOMM40L and TOMM70. Interacts with mitochondrial targeting sequences.

It is found in the mitochondrion outer membrane. Its function is as follows. Potential channel-forming protein implicated in import of protein precursors into mitochondria. This Mus musculus (Mouse) protein is Mitochondrial import receptor subunit TOM40B (Tomm40l).